A 480-amino-acid chain; its full sequence is ATP synthase subunit beta, chloroplastic (480 aa).

161–168 (GGAGVGKT) lines the ATP pocket.

The protein belongs to the ATPase alpha/beta chains family. As to quaternary structure, F-type ATPases have 2 components, CF(1) - the catalytic core - and CF(0) - the membrane proton channel. CF(1) has five subunits: alpha(3), beta(3), gamma(1), delta(1), epsilon(1). CF(0) has four main subunits: a(1), b(1), b'(1) and c(9-12).

It is found in the plastid. The protein localises to the chloroplast thylakoid membrane. The enzyme catalyses ATP + H2O + 4 H(+)(in) = ADP + phosphate + 5 H(+)(out). In terms of biological role, produces ATP from ADP in the presence of a proton gradient across the membrane. The catalytic sites are hosted primarily by the beta subunits. In Tetradesmus obliquus (Green alga), this protein is ATP synthase subunit beta, chloroplastic.